The chain runs to 224 residues: Oxaloacetate tautomerase FAHD2, mitochondrial (224 aa).

A mitochondrion-targeting transit peptide spans 1-30 (MATSMIQRLFKQGTKIVGVGLNYASHAKEL). 3 residues coordinate Mg(2+): Glu67, Glu69, and Asp98.

This sequence belongs to the FAH family. It depends on Mg(2+) as a cofactor. Requires Mn(2+) as cofactor.

It is found in the mitochondrion. It carries out the reaction oxaloacetate = enol-oxaloacetate. Tautomerase that converts enol-oxaloacetate, a strong inhibitor of succinate dehydrogenase, to the physiological keto form of oxaloacetate. The sequence is that of Oxaloacetate tautomerase FAHD2, mitochondrial from Arabidopsis thaliana (Mouse-ear cress).